A 223-amino-acid chain; its full sequence is Thiamine-phosphate synthase (223 aa).

Residues 37-41 (QLREK) and asparagine 69 contribute to the 4-amino-2-methyl-5-(diphosphooxymethyl)pyrimidine site. 2 residues coordinate Mg(2+): aspartate 70 and aspartate 89. A 4-amino-2-methyl-5-(diphosphooxymethyl)pyrimidine-binding site is contributed by serine 108. 134 to 136 (TGT) contacts 2-[(2R,5Z)-2-carboxy-4-methylthiazol-5(2H)-ylidene]ethyl phosphate. 4-amino-2-methyl-5-(diphosphooxymethyl)pyrimidine is bound at residue lysine 137. 2-[(2R,5Z)-2-carboxy-4-methylthiazol-5(2H)-ylidene]ethyl phosphate contacts are provided by residues glycine 167 and 187 to 188 (VS). Residues 197-223 (AAATRKLQGSVDTASVESQLPSEEPSA) form a disordered region. Residues 206 to 217 (SVDTASVESQLP) are compositionally biased toward polar residues.

It belongs to the thiamine-phosphate synthase family. Mg(2+) serves as cofactor.

The catalysed reaction is 2-[(2R,5Z)-2-carboxy-4-methylthiazol-5(2H)-ylidene]ethyl phosphate + 4-amino-2-methyl-5-(diphosphooxymethyl)pyrimidine + 2 H(+) = thiamine phosphate + CO2 + diphosphate. It carries out the reaction 2-(2-carboxy-4-methylthiazol-5-yl)ethyl phosphate + 4-amino-2-methyl-5-(diphosphooxymethyl)pyrimidine + 2 H(+) = thiamine phosphate + CO2 + diphosphate. The enzyme catalyses 4-methyl-5-(2-phosphooxyethyl)-thiazole + 4-amino-2-methyl-5-(diphosphooxymethyl)pyrimidine + H(+) = thiamine phosphate + diphosphate. It functions in the pathway cofactor biosynthesis; thiamine diphosphate biosynthesis; thiamine phosphate from 4-amino-2-methyl-5-diphosphomethylpyrimidine and 4-methyl-5-(2-phosphoethyl)-thiazole: step 1/1. In terms of biological role, condenses 4-methyl-5-(beta-hydroxyethyl)thiazole monophosphate (THZ-P) and 2-methyl-4-amino-5-hydroxymethyl pyrimidine pyrophosphate (HMP-PP) to form thiamine monophosphate (TMP). This Haloquadratum walsbyi (strain DSM 16790 / HBSQ001) protein is Thiamine-phosphate synthase.